Reading from the N-terminus, the 62-residue chain is uncharacterized protein (62 aa).

Polar residues predominate over residues 1-13 (MGESKSPQESSSE). The disordered stretch occupies residues 1–62 (MGESKSPQES…SRREFRRKSG (62 aa)). Residues 14–28 (GETKRKFREALDRKM) are compositionally biased toward basic and acidic residues.

This is an uncharacterized protein from Mycobacterium tuberculosis (strain ATCC 25618 / H37Rv).